We begin with the raw amino-acid sequence, 250 residues long: Triosephosphate isomerase (250 aa).

9 to 11 serves as a coordination point for substrate; that stretch reads NWK. His96 (electrophile) is an active-site residue. Glu166 serves as the catalytic Proton acceptor. Substrate-binding positions include Gly172, Ser212, and 233–234; that span reads GG.

Belongs to the triosephosphate isomerase family. In terms of assembly, homodimer.

Its subcellular location is the cytoplasm. The enzyme catalyses D-glyceraldehyde 3-phosphate = dihydroxyacetone phosphate. Its pathway is carbohydrate biosynthesis; gluconeogenesis. The protein operates within carbohydrate degradation; glycolysis; D-glyceraldehyde 3-phosphate from glycerone phosphate: step 1/1. Functionally, involved in the gluconeogenesis. Catalyzes stereospecifically the conversion of dihydroxyacetone phosphate (DHAP) to D-glyceraldehyde-3-phosphate (G3P). This is Triosephosphate isomerase from Chlorobium phaeobacteroides (strain BS1).